The chain runs to 152 residues: Transcriptional regulator MraZ (152 aa).

SpoVT-AbrB domains follow at residues 5–52 (HSNR…PMPE) and 81–124 (ATEV…DQGR).

The protein belongs to the MraZ family. As to quaternary structure, forms oligomers.

Its subcellular location is the cytoplasm. The protein resides in the nucleoid. In Solidesulfovibrio magneticus (strain ATCC 700980 / DSM 13731 / RS-1) (Desulfovibrio magneticus), this protein is Transcriptional regulator MraZ.